We begin with the raw amino-acid sequence, 154 residues long: Endoribonuclease YbeY (154 aa).

Zn(2+) is bound by residues histidine 113, histidine 117, and histidine 123.

It belongs to the endoribonuclease YbeY family. The cofactor is Zn(2+).

The protein localises to the cytoplasm. In terms of biological role, single strand-specific metallo-endoribonuclease involved in late-stage 70S ribosome quality control and in maturation of the 3' terminus of the 16S rRNA. This is Endoribonuclease YbeY from Aeromonas hydrophila subsp. hydrophila (strain ATCC 7966 / DSM 30187 / BCRC 13018 / CCUG 14551 / JCM 1027 / KCTC 2358 / NCIMB 9240 / NCTC 8049).